The primary structure comprises 914 residues: MEAAVKEEISLEDEAVDKNIFRDCNKIAFYRRQKQWLSKKSTYQALLDSVTTDEDSTRFQIINEASKVPLLAEIYGIEGNIFRLKINEETPLKPRFEVPDVLTSKPSTVRLISCSGDTGSLILADGKGDLKCHITANPFKVDLVSEEEVVISINSLGQLYFEHLQILHKQRAAKENEEETSVDTSQENQEDLGLWEEKFGKFVDIKANGPSSIGLDFSLHGFEHLYGIPQHAESHQLKNTGDGDAYRLYNLDVYGYQIYDKMGIYGSVPYLLAHKLGRTIGIFWLNASETLVEINTEPAVEYTLTQMGPVAAKQKVRSRTHVHWMSESGIIDVFLLTGPTPSDVFKQYSHLTGTQAMPPLFSLGYHQCRWNYEDEQDVKAVDAGFDEHDIPYDAMWLDIEHTEGKRYFTWDKNRFPNPKRMQELLRSKKRKLVVISDPHIKIDPDYSVYVKAKDQGFFVKNQEGEDFEGVCWPGLSSYLDFTNPKVREWYSSLFAFPVYQGSTDILFLWNDMNEPSVFRGPEQTMQKNAIHHGNWEHRELHNIYGFYHQMATAEGLIKRSKGKERPFVLTRSFFAGSQKYGAVWTGDNTAEWSNLKISIPMLLTLSITGISFCGADIGGFIGNPETELLVRWYQAGAYQPFFRGHATMNTKRREPWLFGEEHTRLIREAIRERYGLLPYWYSLFYHAHVASQPVMRPLWVEFPDELKTFDMEDEYMLGSALLVHPVTEPKATTVDVFLPGSNEVWYDYKTFAHWEGGCTVKIPVALDTIPVFQRGGSVIPIKTTVGKSTGWMTESSYGLRVALSTKGSSVGELYLDDGHSFQYLHQKQFLHRKFSFCSSVLINSFADQRGHYPSKCVVEKILVLGFRKEPSSVTTHSSDGKDQPVAFTYCAKTSILSLEKLSLNIATDWEVRII.

Catalysis depends on Asp511, which acts as the Nucleophile. Residue Glu514 is part of the active site. Asp587 (proton donor) is an active-site residue.

It belongs to the glycosyl hydrolase 31 family.

The catalysed reaction is Hydrolysis of terminal, non-reducing (1-&gt;4)-linked alpha-D-glucose residues with release of alpha-D-glucose.. Has alpha-glucosidase activity. This is Neutral alpha-glucosidase C (GANC) from Homo sapiens (Human).